The following is a 533-amino-acid chain: Probable nucleolar protein 5-2 (533 aa).

Residues 281 to 399 (IAPNLTALVG…LEARLRNLEG (119 aa)) form the Nop domain. 2 disordered regions span residues 401–433 (DLGR…ITPA) and 445–533 (GETS…KSKD). Positions 413 to 424 (PKIEVYNKDKKM) are enriched in basic and acidic residues. Positions 521-533 (KKDKKEKKKKSKD) are enriched in basic residues.

The protein belongs to the NOP5/NOP56 family.

Its subcellular location is the nucleus. The protein resides in the nucleolus. Required for 60S ribosomal subunit biogenesis. The sequence is that of Probable nucleolar protein 5-2 (NOP5-2) from Arabidopsis thaliana (Mouse-ear cress).